Reading from the N-terminus, the 204-residue chain is Methylthioribulose-1-phosphate dehydratase (204 aa).

Positions 94 and 96 each coordinate Zn(2+).

This sequence belongs to the aldolase class II family. MtnB subfamily. Requires Zn(2+) as cofactor.

The catalysed reaction is 5-(methylsulfanyl)-D-ribulose 1-phosphate = 5-methylsulfanyl-2,3-dioxopentyl phosphate + H2O. It functions in the pathway amino-acid biosynthesis; L-methionine biosynthesis via salvage pathway; L-methionine from S-methyl-5-thio-alpha-D-ribose 1-phosphate: step 2/6. Its function is as follows. Catalyzes the dehydration of methylthioribulose-1-phosphate (MTRu-1-P) into 2,3-diketo-5-methylthiopentyl-1-phosphate (DK-MTP-1-P). This is Methylthioribulose-1-phosphate dehydratase from Cronobacter sakazakii (strain ATCC BAA-894) (Enterobacter sakazakii).